The sequence spans 629 residues: MAVPPGHGPFSGFPGPQEHTQVLPDVRLLPRRLPLAFRDAASAPLRKLSVDLIKTYKHINEVYYAKKKRRAQQAPPQDSSTKKEKKVLNHGYDDDNHDYIVRSGERWLERYEIDSLIGKGSFGQVVKAYDHQTQELVAIKIIKNKKAFLNQAQIELRLLELMNQHDTEMKYYIVHLKRHFMFRNHLCLVFELLSYNLYDLLRNTHFRGVSLNLTRKLAQQLCTALLFLATPELSIIHCDLKPENILLCNPKRSAIKIVDFGSSCQLGQRIYQYIQSRFYRSPEVLLGTPYDLAIDMWSLGCILVEMHTGEPLFSGSNEVDQMSRIVEVLGIPPAPMLEQAPKARKYFERLPGGGWTLRRTKELRKDYQGPGTRRLQEVLGVQTGGPGGRRAGEPGHSPADYLRFQDLVLRMLEYEPAARISPLGALQHGFFRRTADEATNTGPAGSSASTSPAPLDTCPSSSTASSISSSGGSSGSSNDNRAYRYSNRYCGGPGPPITDCEMNSPQVLPSQPLRPWAGGDVPHKTHQAPISASTLPGTGAQLPPLPRCLGRPPSPTSPPPPELMDVSLVGSPPDCSPPPPAPAPQHPAASALRTRMTGGRPPLPPPDDPATLGPRLGLHGVPQSTAASS.

Tyr63 carries the phosphotyrosine modification. The tract at residues Lys67–Lys86 is disordered. A Bipartite nuclear localization signal motif is present at residues Arg69–Lys86. Residues Tyr92 and Tyr111 each carry the phosphotyrosine modification. The Protein kinase domain occupies Tyr111–Phe431. Residue Ile117–Val125 participates in ATP binding. Tyr129 is modified (phosphotyrosine). An ATP-binding site is contributed by Lys140. Residue Tyr171 is modified to Phosphotyrosine. ATP is bound at residue Phe190 to Leu193. Asp239 functions as the Proton acceptor in the catalytic mechanism. Ser262 is modified (phosphoserine). Tyr271 is subject to Phosphotyrosine; by autocatalysis. Tyr273 carries the post-translational modification Phosphotyrosine. The interval Gly380–Ala399 is disordered. At Tyr401 the chain carries Phosphotyrosine. 2 disordered regions span residues Asp436 to Asn480 and Pro496 to Ser629. The span at Ala438 to Ser477 shows a compositional bias: low complexity. An interaction with RANBP9 region spans residues Asn480–Asp520. 2 stretches are compositionally biased toward pro residues: residues Pro552–Glu562 and Asp574–Gln585. Ser624 is modified (phosphoserine).

This sequence belongs to the protein kinase superfamily. CMGC Ser/Thr protein kinase family. MNB/DYRK subfamily. As to quaternary structure, dimer. Interacts with DCOHM, MAP2K3/MKK3, RANBP9 and TCF1/HNF1A. Part of a complex consisting of RANBP9, RAN, DYRK1B and COPS5. Interacts with DCAF7. Interacts with RNF169. In terms of processing, phosphorylated by MAP kinase. Tyrosine phosphorylation may be required for dimerization. As to expression, isoform 1 and isoform 2 are broadly expressed. Isoform 3 seems specific for skeletal muscle (at protein level).

The protein localises to the nucleus. It is found in the nucleolus. The protein resides in the chromosome. The catalysed reaction is L-seryl-[protein] + ATP = O-phospho-L-seryl-[protein] + ADP + H(+). The enzyme catalyses L-threonyl-[protein] + ATP = O-phospho-L-threonyl-[protein] + ADP + H(+). It catalyses the reaction L-tyrosyl-[protein] + ATP = O-phospho-L-tyrosyl-[protein] + ADP + H(+). Its activity is regulated as follows. Inhibited by RANBP9. Its function is as follows. Dual-specificity kinase which possesses both serine/threonine and tyrosine kinase activities. Plays an essential role in ribosomal DNA (rDNA) double-strand break repair and rDNA copy number maintenance. During DNA damage, mediates transcription silencing in part via phosphorylating and enforcing DSB accumulation of the histone methyltransferase EHMT2. Enhances the transcriptional activity of TCF1/HNF1A and FOXO1. Inhibits epithelial cell migration. Mediates colon carcinoma cell survival in mitogen-poor environments. Inhibits the SHH and WNT1 pathways, thereby enhancing adipogenesis. In addition, promotes expression of the gluconeogenic enzyme glucose-6-phosphatase catalytic subunit 1 (G6PC1). The protein is Dual specificity tyrosine-phosphorylation-regulated kinase 1B (Dyrk1b) of Mus musculus (Mouse).